The sequence spans 89 residues: MALSPEKKNEIIENFKTHEGDTGSPEVQIALLTERINQLTMHLKSFKKDHHSRRGLLKMVGQRRALLNYLRDRNFDRYRTILEKLGLRK.

Over residues 1–21 (MALSPEKKNEIIENFKTHEGD) the composition is skewed to basic and acidic residues. The interval 1-23 (MALSPEKKNEIIENFKTHEGDTG) is disordered.

The protein belongs to the universal ribosomal protein uS15 family. Part of the 30S ribosomal subunit. Forms a bridge to the 50S subunit in the 70S ribosome, contacting the 23S rRNA.

One of the primary rRNA binding proteins, it binds directly to 16S rRNA where it helps nucleate assembly of the platform of the 30S subunit by binding and bridging several RNA helices of the 16S rRNA. Functionally, forms an intersubunit bridge (bridge B4) with the 23S rRNA of the 50S subunit in the ribosome. The protein is Small ribosomal subunit protein uS15 of Desulforamulus reducens (strain ATCC BAA-1160 / DSM 100696 / MI-1) (Desulfotomaculum reducens).